The sequence spans 222 residues: N-(5'-phosphoribosyl)anthranilate isomerase (222 aa).

This sequence belongs to the TrpF family.

The catalysed reaction is N-(5-phospho-beta-D-ribosyl)anthranilate = 1-(2-carboxyphenylamino)-1-deoxy-D-ribulose 5-phosphate. It functions in the pathway amino-acid biosynthesis; L-tryptophan biosynthesis; L-tryptophan from chorismate: step 3/5. This Rhizobium leguminosarum bv. trifolii (strain WSM2304) protein is N-(5'-phosphoribosyl)anthranilate isomerase.